A 640-amino-acid chain; its full sequence is 1,4-alpha-glucan branching enzyme GlgB (640 aa).

Catalysis depends on Asp318, which acts as the Nucleophile. The Proton donor role is filled by Glu371.

This sequence belongs to the glycosyl hydrolase 13 family. GlgB subfamily. Monomer.

It carries out the reaction Transfers a segment of a (1-&gt;4)-alpha-D-glucan chain to a primary hydroxy group in a similar glucan chain.. It functions in the pathway glycan biosynthesis; glycogen biosynthesis. Functionally, catalyzes the formation of the alpha-1,6-glucosidic linkages in glycogen by scission of a 1,4-alpha-linked oligosaccharide from growing alpha-1,4-glucan chains and the subsequent attachment of the oligosaccharide to the alpha-1,6 position. In Francisella tularensis subsp. holarctica (strain LVS), this protein is 1,4-alpha-glucan branching enzyme GlgB.